Reading from the N-terminus, the 655-residue chain is p-hydroxybenzoic acid efflux pump subunit AaeB (655 aa).

11 helical membrane passes run Phe-13 to Leu-33, Trp-38 to Pro-58, Leu-69 to Ile-89, Leu-93 to Val-113, Trp-121 to Leu-141, Glu-152 to Ile-172, Leu-370 to Val-390, Phe-407 to Pro-427, Gln-431 to Val-451, Met-459 to Phe-479, and Phe-482 to Leu-502.

It belongs to the aromatic acid exporter ArAE (TC 2.A.85) family.

It localises to the cell inner membrane. Functionally, forms an efflux pump with AaeA. Could function as a metabolic relief valve, allowing to eliminate certain compounds when they accumulate to high levels in the cell. This Salmonella heidelberg (strain SL476) protein is p-hydroxybenzoic acid efflux pump subunit AaeB.